The primary structure comprises 284 residues: Pantothenate synthetase (284 aa).

ATP is bound at residue 30 to 37 (MGALHDGH). The active-site Proton donor is His-37. Gln-61 provides a ligand contact to (R)-pantoate. Gln-61 is a binding site for beta-alanine. Residue 147–150 (GEKD) participates in ATP binding. A (R)-pantoate-binding site is contributed by Gln-153. ATP contacts are provided by residues Val-176 and 184–187 (KSSR).

This sequence belongs to the pantothenate synthetase family. In terms of assembly, homodimer.

It localises to the cytoplasm. The enzyme catalyses (R)-pantoate + beta-alanine + ATP = (R)-pantothenate + AMP + diphosphate + H(+). It participates in cofactor biosynthesis; (R)-pantothenate biosynthesis; (R)-pantothenate from (R)-pantoate and beta-alanine: step 1/1. Functionally, catalyzes the condensation of pantoate with beta-alanine in an ATP-dependent reaction via a pantoyl-adenylate intermediate. The sequence is that of Pantothenate synthetase from Chloroherpeton thalassium (strain ATCC 35110 / GB-78).